The following is a 62-amino-acid chain: Photosystem II reaction center protein Z (62 aa).

The next 2 helical transmembrane spans lie at 8-28 (AVFA…VVFA) and 41-61 (FSGT…NSLI).

It belongs to the PsbZ family. As to quaternary structure, PSII is composed of 1 copy each of membrane proteins PsbA, PsbB, PsbC, PsbD, PsbE, PsbF, PsbH, PsbI, PsbJ, PsbK, PsbL, PsbM, PsbT, PsbY, PsbZ, Psb30/Ycf12, at least 3 peripheral proteins of the oxygen-evolving complex and a large number of cofactors. It forms dimeric complexes.

It localises to the plastid. The protein resides in the chloroplast thylakoid membrane. Functionally, may control the interaction of photosystem II (PSII) cores with the light-harvesting antenna, regulates electron flow through the 2 photosystem reaction centers. PSII is a light-driven water plastoquinone oxidoreductase, using light energy to abstract electrons from H(2)O, generating a proton gradient subsequently used for ATP formation. This chain is Photosystem II reaction center protein Z, found in Coffea arabica (Arabian coffee).